Consider the following 1023-residue polypeptide: NRPS-like oxidoreductase fscA (1023 aa).

The adenylation stretch occupies residues 54 to 454 (TYGDLNGMAT…NHPFVRQCMV (401 aa)). One can recognise a Carrier domain in the interval 554-637 (PEDDVIGRQI…SIANHVRSAQ (84 aa)). Residue Ser-596 is modified to O-(pantetheine 4'-phosphoryl)serine. The region spanning 685–901 (LTGGAGYLGQ…VYDESTTRAR (217 aa)) is the Thioester reductase (TE) domain.

It belongs to the NRP synthetase family. Requires pantetheine 4'-phosphate as cofactor.

It functions in the pathway secondary metabolite biosynthesis. Functionally, NRPS-like oxidoreductasee; part of the fragmented gene cluster that mediates the biosynthesis of fusarochromene, a tryptophan-derived metabolite closely related to a group of mycotoxins including fusarochromanone. Within the pathway, fscA acts as an oxidoreductase that reduces the carboxyl group of 4-hydroxykyrunenine to primary alcohol. The first step of the pathway is the epimerization of L-tryptophan to D-tryptophan in the presence of the NRPS-like tryptophan epimerase fscC. D-tryptophan is subsequently hydroxylated by the tryptophan 6-hydroxylase fscE to yield 6-hydroxytryptophan. The pyrrole ring undergoes cleavaged by the tryptophan 2,3-dioxygenase fscD and is finally converted to 4-hydroxykyrunenine by the hydrolase fscH. The NRPS-like oxidoreductase fscA reduces the carboxyl group to primary alcohol and the DMATS-type prenyltransferase fscG performs prenylation, followed by the formation of a chromene ring catalyzed by the oxidoreductase fscI, which leads to desacetylfusarochromene. Epoxidation by fscF and rearrangement reactions of chromene double bonds convert compound desacetylfusarochromene to fusarochromanones. Although specific acetyltransferases were not found near the fsc gene cluster, several predicted enzymes containing the N-acetyltransferase superfamily domain are present in the genome of F.equiseti. These predicted enzymes may have the potential to convert desacetylfusarochromene to fusarochromene. This is NRPS-like oxidoreductase fscA from Fusarium equiseti (Fusarium scirpi).